Consider the following 689-residue polypeptide: Glycine--tRNA ligase beta subunit (689 aa).

Belongs to the class-II aminoacyl-tRNA synthetase family. In terms of assembly, tetramer of two alpha and two beta subunits.

The protein localises to the cytoplasm. The catalysed reaction is tRNA(Gly) + glycine + ATP = glycyl-tRNA(Gly) + AMP + diphosphate. The chain is Glycine--tRNA ligase beta subunit from Shigella dysenteriae serotype 1 (strain Sd197).